A 266-amino-acid chain; its full sequence is Glucosamine-6-phosphate deaminase (266 aa).

The active-site Proton acceptor; for enolization step is the Asp-72. Catalysis depends on Asp-141, which acts as the For ring-opening step. The Proton acceptor; for ring-opening step role is filled by His-143. Glu-148 acts as the For ring-opening step in catalysis.

Belongs to the glucosamine/galactosamine-6-phosphate isomerase family. NagB subfamily. As to quaternary structure, homohexamer.

It catalyses the reaction alpha-D-glucosamine 6-phosphate + H2O = beta-D-fructose 6-phosphate + NH4(+). The protein operates within amino-sugar metabolism; N-acetylneuraminate degradation; D-fructose 6-phosphate from N-acetylneuraminate: step 5/5. Its activity is regulated as follows. Allosterically activated by N-acetylglucosamine 6-phosphate (GlcNAc6P). In terms of biological role, catalyzes the reversible isomerization-deamination of glucosamine 6-phosphate (GlcN6P) to form fructose 6-phosphate (Fru6P) and ammonium ion. This Aliivibrio fischeri (strain ATCC 700601 / ES114) (Vibrio fischeri) protein is Glucosamine-6-phosphate deaminase.